The primary structure comprises 391 residues: MKIFLCIIAVVSLQGVVAFHVEREYAWKNITYEGIDPASYNIENSIPTAFAHDAASKKIFITVPRRNQIPFTLTELDTTKHPERSPPLSKFPGSDKLISVYQPVIDECRRLWIADVGQVEYKGDEQKYPKQKAAIIAYDLTKDNYPEIDRYEIPNNVAGNSLGFGGFAVDVTNPKEGCGNTFVYITNFEDNTLIVYDQEKKDSWKISHGSFKPEHDSTLSHNGEQYKYRVGIFGIALGDRDPEGNRPAYYIAGSSTKLFEISTKILKQKGAKFDPVNLGNRGPHSEAIALAYDPKTKVIFFAEADSRQISCWNIQKPLNHKNTDVIYASSKFIFGTDISVDSESQLWFLSNGQPPIDNLKLTFDKPHIRLMRVDTAKAIRRTKCEVKRVKP.

A signal peptide spans M1–A18. N-linked (GlcNAc...) asparagine glycosylation occurs at N29.

This sequence belongs to the major royal jelly protein family. Female salivary gland (at protein level).

Its subcellular location is the secreted. Its function is as follows. Probably modulates blood feeding of sand flies on vertebrate species by binding and sequestering different mediators involved in the host response. Binds biogenic amines. Binds serotonin and dopamine with high affinity. Binds adrenaline, octopamine and adrenaline with medium affinity. Binds histamine with low affinity. The chain is Yellow-related salivary protein ASP4 from Phlebotomus orientalis (Phlebotomine sand fly).